Consider the following 442-residue polypeptide: Elongation factor 1-gamma (442 aa).

The 86-residue stretch at 2–87 (AAGTLYTYPE…YLSNDVLRGS (86 aa)) folds into the GST N-terminal domain. One can recognise a GST C-terminal domain in the interval 88 to 216 (TPQASAQVLQ…VKLCEKMAQF (129 aa)). Basic and acidic residues-rich tracts occupy residues 227–242 (KKEA…KEGG) and 249–263 (QEKK…KAAP). Residues 227–273 (KKEAPIKKEKGGKEGGKQQPQQQEKKEKKKEEKKAAPAEEEMDECEA) form a disordered region. Positions 281 to 442 (AKDPFAHLPK…KPFNQGKIFK (162 aa)) constitute an EF-1-gamma C-terminal domain.

EF-1 is composed of four subunits: alpha, beta, delta, and gamma.

Probably plays a role in anchoring the complex to other cellular components. The polypeptide is Elongation factor 1-gamma (eef1g) (Danio rerio (Zebrafish)).